Consider the following 252-residue polypeptide: Ditrans,polycis-undecaprenyl-diphosphate synthase ((2E,6E)-farnesyl-diphosphate specific) (252 aa).

D25 is an active-site residue. Mg(2+) is bound at residue D25. Residues 26–29, W30, R38, H42, and 70–72 contribute to the substrate site; these read GNGR and SSE. Residue N73 is the Proton acceptor of the active site. Positions 74, 76, and 193 each coordinate substrate. H198 contacts Mg(2+). 199-201 is a binding site for substrate; sequence RIS. E212 provides a ligand contact to Mg(2+).

It belongs to the UPP synthase family. As to quaternary structure, homodimer. Mg(2+) serves as cofactor.

The catalysed reaction is 8 isopentenyl diphosphate + (2E,6E)-farnesyl diphosphate = di-trans,octa-cis-undecaprenyl diphosphate + 8 diphosphate. In terms of biological role, catalyzes the sequential condensation of isopentenyl diphosphate (IPP) with (2E,6E)-farnesyl diphosphate (E,E-FPP) to yield (2Z,6Z,10Z,14Z,18Z,22Z,26Z,30Z,34E,38E)-undecaprenyl diphosphate (di-trans,octa-cis-UPP). UPP is the precursor of glycosyl carrier lipid in the biosynthesis of bacterial cell wall polysaccharide components such as peptidoglycan and lipopolysaccharide. In Salmonella paratyphi A (strain ATCC 9150 / SARB42), this protein is Ditrans,polycis-undecaprenyl-diphosphate synthase ((2E,6E)-farnesyl-diphosphate specific).